The chain runs to 312 residues: sn-1-specific diacylglycerol lipase ABHD11 (312 aa).

Residues 1 to 14 (MITFKSFHCSRGWH) constitute a mitochondrion transit peptide. Residues 62–297 (PPLVLLHGLF…GAGHWVHADK (236 aa)) enclose the AB hydrolase-1 domain. Residues S136, E232, and H291 each act as charge relay system in the active site.

This sequence belongs to the AB hydrolase superfamily. Phosphorylated.

It localises to the mitochondrion. Its subcellular location is the mitochondrion matrix. The enzyme catalyses 1-octadecanoyl-2-(5Z,8Z,11Z,14Z-eicosatetraenoyl)-sn-glycerol + H2O = 2-(5Z,8Z,11Z,14Z-eicosatetraenoyl)-glycerol + octadecanoate + H(+). The catalysed reaction is a 1,2-diacyl-sn-glycerol + H2O = a 2-acylglycerol + a fatty acid + H(+). It catalyses the reaction a 1,3-diacyl-sn-glycerol + H2O = a 1-acyl-sn-glycerol + a fatty acid + H(+). It carries out the reaction 1-octadecanoyl-2-(9Z-octadecenoyl)-sn-glycerol + H2O = 2-(9Z-octadecenoyl)-glycerol + octadecanoate + H(+). The enzyme catalyses 1-octadecanoyl-2-(4Z,7Z,10Z,13Z,16Z,19Z-docosahexaenoyl)-sn-glycerol + H2O = 2-(4Z,7Z,10Z,13Z,16Z,19Z-docosahexaenoyl)-glycerol + octadecanoate + H(+). The catalysed reaction is 1,2-didecanoylglycerol + H2O = decanoylglycerol + decanoate + H(+). Functionally, catalyzes the hydrolysis of diacylglycerol in vitro and may function as a key regulator in lipid metabolism, namely by regulating the intracellular levels of diacylglycerol. 1,2-diacyl-sn-glycerols are the preferred substrate over 1,3-diacyl-sn-glycerols. The enzyme hydrolyzes stearate in preference to palmitate from the sn-1 position of 1,2-diacyl-sn-glycerols. This Xenopus laevis (African clawed frog) protein is sn-1-specific diacylglycerol lipase ABHD11.